A 506-amino-acid polypeptide reads, in one-letter code: ATP synthase subunit alpha (506 aa).

172–179 (GDRKTGKT) is a binding site for ATP.

This sequence belongs to the ATPase alpha/beta chains family. In terms of assembly, F-type ATPases have 2 components, CF(1) - the catalytic core - and CF(0) - the membrane proton channel. CF(1) has five subunits: alpha(3), beta(3), gamma(1), delta(1), epsilon(1). CF(0) has three main subunits: a(1), b(2) and c(9-12). The alpha and beta chains form an alternating ring which encloses part of the gamma chain. CF(1) is attached to CF(0) by a central stalk formed by the gamma and epsilon chains, while a peripheral stalk is formed by the delta and b chains.

The protein localises to the cell membrane. It catalyses the reaction ATP + H2O + 4 H(+)(in) = ADP + phosphate + 5 H(+)(out). Produces ATP from ADP in the presence of a proton gradient across the membrane. The alpha chain is a regulatory subunit. The protein is ATP synthase subunit alpha of Lactobacillus gasseri (strain ATCC 33323 / DSM 20243 / BCRC 14619 / CIP 102991 / JCM 1131 / KCTC 3163 / NCIMB 11718 / NCTC 13722 / AM63).